We begin with the raw amino-acid sequence, 30 residues long: Fibrinogen (30 aa).

As to quaternary structure, homodimer. In terms of tissue distribution, secreted into the hemolymph.

Its subcellular location is the secreted. The protein localises to the extracellular space. In terms of biological role, clotting protein. This Panulirus interruptus (California spiny lobster) protein is Fibrinogen.